The sequence spans 212 residues: Peptide methionine sulfoxide reductase MsrA (212 aa).

Cys-52 is a catalytic residue.

This sequence belongs to the MsrA Met sulfoxide reductase family.

The catalysed reaction is L-methionyl-[protein] + [thioredoxin]-disulfide + H2O = L-methionyl-(S)-S-oxide-[protein] + [thioredoxin]-dithiol. It catalyses the reaction [thioredoxin]-disulfide + L-methionine + H2O = L-methionine (S)-S-oxide + [thioredoxin]-dithiol. In terms of biological role, has an important function as a repair enzyme for proteins that have been inactivated by oxidation. Catalyzes the reversible oxidation-reduction of methionine sulfoxide in proteins to methionine. This chain is Peptide methionine sulfoxide reductase MsrA, found in Salmonella arizonae (strain ATCC BAA-731 / CDC346-86 / RSK2980).